We begin with the raw amino-acid sequence, 287 residues long: Mitochondrial dicarboxylate carrier (287 aa).

Solcar repeat units lie at residues 8-88 (SRWY…VRDR), 101-188 (EKVL…AKQL), and 197-280 (DNIF…LRKN). 6 helical membrane passes run 10–30 (WYFG…LDLL), 63–82 (GLSA…FAIY), 103–123 (VLLG…ADLV), 163–182 (GATM…LSCY), 203–223 (FVAS…LDVL), and 255–275 (GLVP…VFLE).

The protein belongs to the mitochondrial carrier (TC 2.A.29) family. Present in high amounts in liver and kidney, and at lower levels in all the other tissues analyzed.

The protein resides in the mitochondrion inner membrane. The enzyme catalyses (S)-malate(in) + phosphate(out) = (S)-malate(out) + phosphate(in). It carries out the reaction malonate(out) + (S)-malate(in) = malonate(in) + (S)-malate(out). The catalysed reaction is (S)-malate(in) + succinate(out) = (S)-malate(out) + succinate(in). It catalyses the reaction (S)-malate(in) + sulfate(out) = (S)-malate(out) + sulfate(in). The enzyme catalyses malonate(out) + phosphate(in) = malonate(in) + phosphate(out). It carries out the reaction succinate(out) + phosphate(in) = succinate(in) + phosphate(out). The catalysed reaction is sulfate(out) + phosphate(in) = sulfate(in) + phosphate(out). It catalyses the reaction malonate(out) + succinate(in) = malonate(in) + succinate(out). Functionally, catalyzes the electroneutral exchange or flux of physiologically important metabolites such as dicarboxylates (malonate, malate, succinate), inorganic sulfur-containing anions, and phosphate, across mitochondrial inner membrane. Plays an important role in gluconeogenesis, fatty acid metabolism, urea synthesis, and sulfur metabolism, particularly in liver, by supplying the substrates for the different metabolic processes. Regulates fatty acid release from adipocytes, and contributes to systemic insulin sensitivity. The chain is Mitochondrial dicarboxylate carrier (SLC25A10) from Homo sapiens (Human).